Consider the following 485-residue polypeptide: uncharacterized protein (485 aa).

The signal sequence occupies residues 1–23; sequence MRRRVCTVVRAVVCLLSTSLLTT. Residue Cys-24 is the site of N-palmitoyl cysteine attachment. Cys-24 carries S-diacylglycerol cysteine lipidation. Residues 308-327 show a composition bias toward low complexity; sequence SAASSPAQCPSSPSSSSSSS. A disordered region spans residues 308-331; that stretch reads SAASSPAQCPSSPSSSSSSSTNAG.

The protein belongs to the TP013X lipoprotein family.

Its subcellular location is the cell membrane. This is an uncharacterized protein from Treponema pallidum (strain Nichols).